Here is a 359-residue protein sequence, read N- to C-terminus: Peptide chain release factor 1 (359 aa).

Q236 is modified (N5-methylglutamine).

This sequence belongs to the prokaryotic/mitochondrial release factor family. In terms of processing, methylated by PrmC. Methylation increases the termination efficiency of RF1.

The protein localises to the cytoplasm. In terms of biological role, peptide chain release factor 1 directs the termination of translation in response to the peptide chain termination codons UAG and UAA. This is Peptide chain release factor 1 from Lacticaseibacillus casei (strain BL23) (Lactobacillus casei).